The sequence spans 612 residues: Glutamine--fructose-6-phosphate aminotransferase [isomerizing] (612 aa).

Residue C2 is the Nucleophile; for GATase activity of the active site. The region spanning 2-219 is the Glutamine amidotransferase type-2 domain; it reads CGIVGANSTR…EGDIAIISKD (218 aa). SIS domains lie at 287–427 and 460–602; these read AKEL…LKNS and ISEY…VDQP. The active-site For Fru-6P isomerization activity is the K607.

In terms of assembly, homodimer.

It is found in the cytoplasm. The catalysed reaction is D-fructose 6-phosphate + L-glutamine = D-glucosamine 6-phosphate + L-glutamate. Catalyzes the first step in hexosamine metabolism, converting fructose-6P into glucosamine-6P using glutamine as a nitrogen source. This is Glutamine--fructose-6-phosphate aminotransferase [isomerizing] from Francisella tularensis subsp. tularensis (strain SCHU S4 / Schu 4).